A 375-amino-acid polypeptide reads, in one-letter code: Putative actin-26 (375 aa).

This sequence belongs to the actin family.

It is found in the cytoplasm. The protein localises to the cytoskeleton. The catalysed reaction is ATP + H2O = ADP + phosphate + H(+). In terms of biological role, actins are highly conserved proteins that are involved in various types of cell motility and are ubiquitously expressed in all eukaryotic cells. Multiple isoforms are involved in various cellular functions such as cytoskeleton structure, cell mobility, chromosome movement and muscle contraction. The polypeptide is Putative actin-26 (act26) (Dictyostelium discoideum (Social amoeba)).